Consider the following 256-residue polypeptide: Major prion protein (256 aa).

The N-terminal stretch at 1–24 is a signal peptide; the sequence is MVKSHIGSWILVLFVAMWSDVGLC. The interaction with GRB2, ERI3 and SYN1 stretch occupies residues 25–233; the sequence is KKRPKPGGGW…ESQAYYQRGA (209 aa). A disordered region spans residues 28–110; the sequence is PKPGGGWNTG…QWNKPSKPKT (83 aa). 5 tandem repeats follow at residues 54–62, 63–70, 71–78, 79–86, and 87–95. The interval 54–95 is 5 X 8 AA tandem repeats of P-H-G-G-G-W-G-Q; the sequence is PQGGGGWGQPHGGGWGQPHGGGWGQPHGGGWGQPHGGGGWGQ. The span at 55–97 shows a compositional bias: gly residues; the sequence is QGGGGWGQPHGGGWGQPHGGGWGQPHGGGWGQPHGGGGWGQGG. Residues His-64, Gly-65, Gly-66, His-72, Gly-73, Gly-74, His-80, Gly-81, Gly-82, His-88, Gly-90, and Gly-91 each coordinate Cu(2+). Cys-182 and Cys-217 are oxidised to a cystine. N-linked (GlcNAc...) asparagine glycans are attached at residues Asn-184 and Asn-200. Ala-233 is lipidated: GPI-anchor amidated alanine. The propeptide at 234 to 256 is removed in mature form; it reads SVILFSPPPVILLISFLIFLIVG.

Belongs to the prion family. In terms of assembly, monomer and homodimer. Has a tendency to aggregate into amyloid fibrils containing a cross-beta spine, formed by a steric zipper of superposed beta-strands. Soluble oligomers may represent an intermediate stage on the path to fibril formation. Copper binding may promote oligomerization. Interacts with GRB2, APP, ERI3/PRNPIP and SYN1. Mislocalized cytosolically exposed PrP interacts with MGRN1; this interaction alters MGRN1 subcellular location and causes lysosomal enlargement. Interacts with KIAA1191.

It localises to the cell membrane. The protein resides in the golgi apparatus. In terms of biological role, its primary physiological function is unclear. Has cytoprotective activity against internal or environmental stresses. May play a role in neuronal development and synaptic plasticity. May be required for neuronal myelin sheath maintenance. May play a role in iron uptake and iron homeostasis. Soluble oligomers are toxic to cultured neuroblastoma cells and induce apoptosis (in vitro). Association with GPC1 (via its heparan sulfate chains) targets PRNP to lipid rafts. Also provides Cu(2+) or Zn(2+) for the ascorbate-mediated GPC1 deaminase degradation of its heparan sulfate side chains. This Capra hircus (Goat) protein is Major prion protein (PRNP).